We begin with the raw amino-acid sequence, 60 residues long: Large ribosomal subunit protein bL32 (60 aa).

Belongs to the bacterial ribosomal protein bL32 family.

The polypeptide is Large ribosomal subunit protein bL32 (Clostridium perfringens (strain ATCC 13124 / DSM 756 / JCM 1290 / NCIMB 6125 / NCTC 8237 / Type A)).